A 116-amino-acid polypeptide reads, in one-letter code: UPF0329 protein ECU05_1650 (116 aa).

This sequence belongs to the UPF0329 family.

The sequence is that of UPF0329 protein ECU05_1650 from Encephalitozoon cuniculi (strain GB-M1) (Microsporidian parasite).